The following is a 179-amino-acid chain: Isopentenyl-diphosphate Delta-isomerase (179 aa).

Residues His25 and His31 each coordinate Mn(2+). In terms of domain architecture, Nudix hydrolase spans 29 to 161 (ELHRAITVYI…PEQFTAWFQL (133 aa)). Cys66 is a catalytic residue. Mg(2+) is bound at residue Cys66. His68 is a binding site for Mn(2+). Residue Glu86 coordinates Mg(2+). Mn(2+) is bound by residues Glu111 and Glu113. Residue Glu113 is part of the active site.

The protein belongs to the IPP isomerase type 1 family. Homodimer. Mg(2+) is required as a cofactor. Requires Mn(2+) as cofactor.

The protein localises to the cytoplasm. The catalysed reaction is isopentenyl diphosphate = dimethylallyl diphosphate. The protein operates within isoprenoid biosynthesis; dimethylallyl diphosphate biosynthesis; dimethylallyl diphosphate from isopentenyl diphosphate: step 1/1. Its function is as follows. Catalyzes the 1,3-allylic rearrangement of the homoallylic substrate isopentenyl (IPP) to its highly electrophilic allylic isomer, dimethylallyl diphosphate (DMAPP). This chain is Isopentenyl-diphosphate Delta-isomerase, found in Pectobacterium atrosepticum (strain SCRI 1043 / ATCC BAA-672) (Erwinia carotovora subsp. atroseptica).